The primary structure comprises 599 residues: Sulfite reductase [NADPH] flavoprotein alpha-component (599 aa).

The Flavodoxin-like domain maps to 64–202 (ITIISASQTG…AASEWRARVV (139 aa)). FMN-binding positions include 70–75 (SQTGNA), 117–120 (STQG), and 153–162 (LGDSSYEFFC). One can recognise an FAD-binding FR-type domain in the interval 234–448 (DAPLVASLSV…IEHNDNFRLP (215 aa)). Residues threonine 322, alanine 356, 386–389 (RLYS), 404–406 (TVG), tyrosine 410, and 419–422 (GGAS) each bind FAD. NADP(+)-binding positions include 519–520 (SR), 525–529 (KVYVQ), and aspartate 561. Tyrosine 599 is a binding site for FAD.

This sequence belongs to the NADPH-dependent sulphite reductase flavoprotein subunit CysJ family. In the N-terminal section; belongs to the flavodoxin family. It in the C-terminal section; belongs to the flavoprotein pyridine nucleotide cytochrome reductase family. Alpha(8)-beta(8). The alpha component is a flavoprotein, the beta component is a hemoprotein. The cofactor is FAD. It depends on FMN as a cofactor.

The enzyme catalyses hydrogen sulfide + 3 NADP(+) + 3 H2O = sulfite + 3 NADPH + 4 H(+). It functions in the pathway sulfur metabolism; hydrogen sulfide biosynthesis; hydrogen sulfide from sulfite (NADPH route): step 1/1. Functionally, component of the sulfite reductase complex that catalyzes the 6-electron reduction of sulfite to sulfide. This is one of several activities required for the biosynthesis of L-cysteine from sulfate. The flavoprotein component catalyzes the electron flow from NADPH -&gt; FAD -&gt; FMN to the hemoprotein component. This Escherichia coli (strain ATCC 8739 / DSM 1576 / NBRC 3972 / NCIMB 8545 / WDCM 00012 / Crooks) protein is Sulfite reductase [NADPH] flavoprotein alpha-component.